We begin with the raw amino-acid sequence, 435 residues long: UDP-N-acetylmuramate--L-alanine ligase (435 aa).

108–114 (GSHGKTS) serves as a coordination point for ATP.

Belongs to the MurCDEF family.

It localises to the cytoplasm. It catalyses the reaction UDP-N-acetyl-alpha-D-muramate + L-alanine + ATP = UDP-N-acetyl-alpha-D-muramoyl-L-alanine + ADP + phosphate + H(+). It participates in cell wall biogenesis; peptidoglycan biosynthesis. Its function is as follows. Cell wall formation. The protein is UDP-N-acetylmuramate--L-alanine ligase of Shouchella clausii (strain KSM-K16) (Alkalihalobacillus clausii).